Reading from the N-terminus, the 92-residue chain is N(2)-fixation sustaining protein CowN (92 aa).

This sequence belongs to the CowN family.

In terms of biological role, is required to sustain N(2)-dependent growth in the presence of low levels of carbon monoxide (CO). Probably acts by protecting the N(2) fixation ability of the nitrogenase complex, which is inactivated in the presence of CO. The protein is N(2)-fixation sustaining protein CowN of Rhodobacter capsulatus (strain ATCC BAA-309 / NBRC 16581 / SB1003).